The following is an 82-amino-acid chain: Small ribosomal subunit protein bS16 (82 aa).

This sequence belongs to the bacterial ribosomal protein bS16 family.

The sequence is that of Small ribosomal subunit protein bS16 from Crocosphaera subtropica (strain ATCC 51142 / BH68) (Cyanothece sp. (strain ATCC 51142)).